The chain runs to 3903 residues: MLAPTDWTDAEILAAAAQAAREEFFGAQRARVGDTGAQDEARGGGVPFLLVRKQLVRLLDEMGVGLQSTRGLQVYRHLLQHVVQATVGECGHDMILFSEESRALFMPPVNGAGGTAASRLANANSWSLASSPSVVSSGPAPVLVSASPGPSGLSDRSFNETTPRVSASSSSAPSSSSSSSPVSFSPSSGPVSSSSTFPPSSSSACPSSSSSSSSSSFSSCSSCSSSPLASATARVQAFAARRKAGEDHRLLLDALREWRRWAAREARLRSLFWTLSSRRRLRALRRSLHAWRANFIEALSRREDSNEEAADGQRTAAVCRRSLLAWSAGVETQSAEARGQVARAAPAEEGCQRYEALQTSFRSWREATVAQREAERQRRLLSAFKAWKESHLSRRVRKQVLEHRAFAVQKSLQDRHMRGVWRYWRAAAEARSRAGAAARETLERTRFRRVFNALLAETRDRQTRRGAAVAAAEATVRERRVRRAFRAWRKVSILRRPPFAAGHSQFSSPQIVCLLKAVSALRREGASEEPGHARSLGEALLDAATARQRRERAQRRGDRDGEETELGRDAQVDLEDAALLTLIPLHGIDLHLPKLSTAAPLMAQALRQHYLRHSFLQWRAEALRQRQFRQAARVSRLARVFRAWREETQKAKGEAAASSAVYAAQKTRILREAWRSWRMRFRRYVLFRTQCRSLQDLRLLHLKSLAFRGWCTFHRERQREAQSVSAVKDRAAAALQRAAWSRWQEAWHLRRRRRAMAEAAALLREKTLLAKGLRGLKRQRASAASLRDAAAALRQERLGLALAVWWRWAARRGAFQELCELQRAKRARRNLRRLLLAWRSLAKRMETRRDAVWRLAAVVDRIRVRRGFCGWNALRMQERKREEAASRLQRTLRDARIRAAWAAWRSAQSLACKEAELRKESEDSLKRRVFKQWQAAAAEHATLQLHLRGQLLCWRLSRLLHRWRRLATLFRLGLLQKSRSRLYVLRRCQEAWLARLAERSEERRKEARAESLCLTLRLRAAQRCLLAWQETAVAVAARRRKGDTFRAQLHRARLDAAWTTWRRGVEELHRRRRLLLGVEKIREKILVAQSLTRWKCAAALLRKEALATQARRQALLRRALQAWTLWRRRRTEKKDEAERVRACLNEEGSAKRAGERQRKKETLAAWHALTEKRFEERRAFSRVEAIGDRLSLRRGFVTWRLWALRLAGLSQATVRLDVWRRRCLLRISYEALSQHRDRVKEMELASLAHLSQLRAQTLRRSFCSWRTQFAALRREAEVLARRRSAAARAEAHAALACKRRSFLAWLKALAAKLALKKRLFVLLKERREALEARTLRAWRRLAKKKGDLRESLEMFSDSRRSQCLRRVFAAVFATVSRRRLVRVRFLFALGLLAPSPDFSVSSAESSHPHSRSLLLPLSPLGPAEEASLRLLWGPALPAPLLAPRLIPRLPGPSRAFESAKECPSVLASLPLVPRLIVWSAQPHMLHLLLLQPAIAESLARQAGQQPQRSAAFFEPLPVSRARLALFSDADAEARTRVWGLPAASLGGEETPGGDKGNGALPLAALASARSRPPSVWSCLTPSTCTPHTSLSVPLSGFEAPPPRPGRTFFRTETGDTLGSARSQFRGRSASPLHSDGPSGREAGSRRHRSATKERDREDREEIDELLLADKKSSKSLERLLRCFSAKQGPEGPLKENAELWGEQAVLADSVRRMRPQNDLQALLLAQVNLSRRPSVQRPAPLFLPSAMGPDAAVSDALDASQDSVESDGSAGGLSVHSEETPLPSKNWREEIPVDLLATAWQFARLLQAALRAWLLQAQRHKAQRLRETGLVAGFRIQSRSRLLAACWGLWRSTKSSLEARTRTKAQRLAWGIQRRVLQAWFLCATVDASAVLRAEAFAETRRSAKTHAMLEAWRGVATKRRQEREQVEAWRQHRARERKQELFALWTHLASVNRAGAQLYVHRRAATLNKVFATWRTSTLRSLALDKLQRIVSRPGLFLGFSLLRIWSLTRACSLRLAAQCLDSWRQHTESRKRLAGLLVYVQTVHKVSRLQQHFSAWLLVQQRRRRLLLLHRTAEAAAFLLPLHRIFSRWRASALDRQAQRDSLLGRFLAQRQRPFLALDPEESAEAKDAGRLGTTPSCAYWARWRIEETWKVWRRRFRLRTLLRRRATRCARTALSALRQAVERRRALEAFERKRRQRLLQRATVAWQVYVQRRLLKQQRTAHAIERYNTHTLRQAFSKCRWLLQRLQWERGVIEVSQAKANRRVCRMTLQALQAYAEARVAERERLDGCRAARSSHLLRMHFEKWSFLLRATHHAASLSRKTSFLLWTRAFRRSRGAALLVAVQRRVEERQTRRGLAALQAESEAFEQIKAFGAETPWLRDAIEEKVSSARASMTFALSSLRLFAAHRVSRRRQARLLAGALASWARLQETDGPRRRLRPYLRHWRGALQYRLHLQAAEEALRRHVEFRRLREVWGAWRHLRREEARGRELLALAEETKKVWALEKGILLLHEHRLQREWMTWCTYRAELFVTDTRHEKARLCVRAWHSWVAKRRELRRRGLEAQEASRLFVLSNAFSALRCAYTRRTALRAAGACVVEKQKRSSLRTAWRGWRKVLVDLLALKPRLEALLARQAFQRVCLAWWGWRMWHQRRKERRQLLGPLSEKARVVRDVQLAAQCFRGWAELAETRATFWRQREGLVEKLVARRLTKETFRAWRLCAREIHFVRSTKAAAANAAALAAAGHGMREMHLPAQAPADRRGRPGPSRETTMSPASSLFSSASVSPTASRRNRRRGGRSGRPRGRDLLSSSLSLSDSQPLERLSQASDRRGGESQTDGDSGDMSETVRRRPGCQRPSEAAPGSPPGGRSKRVHAAAGRRRQGAREILEEREISRLARSAVAWLPRAAERSDEAEERALRRRSASAVFGSRGRDGESGLGEMRSTTGPAGGHRAWESEASGEDTEGEEGPRNLQGQEAEASTSGKKARGTCGLAVSFSLGSPLSSDRPSSPLSVAAHEPPPPPGKTRLHRVSSSLSSPRPRGAHAKETPAGPPSSPSSASSASLRQGPRQLRLQDLLSDSSSSLASAQPAPVFAPQENRGKSKSDSVESPSPLTVATSLLEALSHSHSSALAEAARSLLLQSGARNPDTKPAASSRDLSESDRSKSFSSADSEMDRTATEDSEDDRGPQGGRRGVRRRRSSPVRRGDRSRRVRREEEEETRRRSTRRRRAAESEQLGEEEDVEEVEEEEVEEEEVEEEEGVSGVEVSLVEKRAEERIRVFPRAIREAPPSAFALPSSLSSLFLTSLQGAQGSRSAETQAREEPRVGRVLALAHSLAGSASRFERGGDEDRVEDEGQSVESARLSTASLDAGERDRVPRKGGKRDHPFFFSLMSSTPSLRDQASGGQSSCSSSPASPSSESSVCVGGPRRRAVGAAKEPLGTRDEAKELRANCDLAEEPASLAGGAAAHRPDPQGAALTEKLRRIVALAVANRLQSPAAASEEDTEENEGVEKEGADEEEDVVHSETGGEAENRAERGRLSLISSTLSTTLLLSELAAPQEDEGVPLGSRSAASASHEETGESREEQETTGCERDSPGVAHRLLLHPATFSLARGSLPPISEGATGSRSSPSPDRLAASTQSEAAAEPTETGDSEAELRKLLARLERVEELHRARDFIGAEADDSGALPVANMQSSVDLRSACEAPQDTERQRRRPERMQSPSPPASPSVAPARRLESEAGANRGVPELSVSPVAGAQEFVFEGNPDAAETGNEVAEVQRQERRRAAEAEAAVAQNAEDERTEREPRDEEAASGGQREEEEWLQDIVAVSRRKAAEARARDQRDESERDARKDTESIAGSEELLEEAWKEARAETRNALLEIHREMKGVALYDGDARDASRT.

N-linked (GlcNAc...) asparagine glycosylation is found at Asn159 and Asn1728.

As to quaternary structure, interacts with CEN1.

It is found in the cytoplasm. The protein resides in the cytoskeleton. Its subcellular location is the microtubule organizing center. The protein localises to the centrosome. Part of the centrosome outer core complex. Plays a role in the initiation and assembly of daughter buds. In Toxoplasma gondii (strain ATCC 50611 / Me49), this protein is Centrin-binding protein SFI1.